The following is a 134-amino-acid chain: Probable glycine cleavage system H protein (134 aa).

The Lipoyl-binding domain occupies T29–K110. Position 70 is an N6-lipoyllysine (K70).

This sequence belongs to the GcvH family. The glycine cleavage system is composed of four proteins: P, T, L and H. Requires (R)-lipoate as cofactor.

The glycine cleavage system catalyzes the degradation of glycine. The H protein shuttles the methylamine group of glycine from the P protein to the T protein. This Pyrococcus horikoshii (strain ATCC 700860 / DSM 12428 / JCM 9974 / NBRC 100139 / OT-3) protein is Probable glycine cleavage system H protein.